The chain runs to 202 residues: uncharacterized protein (202 aa).

The N-terminal stretch at 1–18 is a signal peptide; the sequence is MKNRLLILSLLVSVPAFA.

This sequence to E.coli YebB.

This is an uncharacterized protein from Escherichia coli (strain K12).